Here is a 357-residue protein sequence, read N- to C-terminus: MPKKVFQQEDVEQKITENFEPKQEFEQDELDIEMDCSQFETTMDRQNTDIPFQHMVRPKVTMWQKLLMATICLFSCGILAQSVQWLVDSWRDNQWIAFVFAMVSLFLVLLGLGTIIKEWRRLVQLKKRLILQEKSREIRSKSAVNLTEVSSEGKELCLKIASLMGIDDKSPQLIAWQEQVHEAYTEQEILRLFSQNVLIPFDRVAKKLISKNAVESALIVAVSPLAIVDMFFIAWRNIRLINQLAKLYGIELGYVSRLRLLRMVFVNMAFAGAAEVIQDLGLEWLSQDITAKLSARVAQGIGVGILTARLGIKAMEFCRPIAVAPEEKLRLSHIQTELLGTLKTTLFSANKVKEKVR.

The next 3 membrane-spanning stretches (helical) occupy residues 67–87 (LMAT…QWLV), 96–116 (IAFV…GTII), and 213–233 (AVES…MFFI).

It belongs to the UPF0283 family.

It is found in the cell inner membrane. The polypeptide is UPF0283 membrane protein HSM_0945 (Histophilus somni (strain 2336) (Haemophilus somnus)).